A 694-amino-acid polypeptide reads, in one-letter code: Elongation factor G (694 aa).

Residues 9-288 (SKIRNIGIMA…VIVKWLPSPK (280 aa)) enclose the tr-type G domain. Residues 18-25 (AHIDAGKT), 82-86 (DTPGH), and 136-139 (NKMD) each bind GTP.

It belongs to the TRAFAC class translation factor GTPase superfamily. Classic translation factor GTPase family. EF-G/EF-2 subfamily.

The protein resides in the cytoplasm. Catalyzes the GTP-dependent ribosomal translocation step during translation elongation. During this step, the ribosome changes from the pre-translocational (PRE) to the post-translocational (POST) state as the newly formed A-site-bound peptidyl-tRNA and P-site-bound deacylated tRNA move to the P and E sites, respectively. Catalyzes the coordinated movement of the two tRNA molecules, the mRNA and conformational changes in the ribosome. This is Elongation factor G from Chlamydia abortus (strain DSM 27085 / S26/3) (Chlamydophila abortus).